The chain runs to 180 residues: Diphosphoinositol polyphosphate phosphohydrolase 2 (180 aa).

Met1 bears the N-acetylmethionine mark. Substrate-binding positions include Arg10, 18–20, and 39–41; these read KKR and SSR. Residues 18–144 form the Nudix hydrolase domain; it reads KKRAACLCFR…VHAEYLEKLK (127 aa). Gly50 and Glu66 together coordinate Mg(2+). Positions 51 to 72 match the Nudix box motif; it reads GGMEPEEEPGGAAVREVYEEAG. Glu69 acts as the Proton acceptor in catalysis. Glu70 lines the Mg(2+) pocket. Residues 89–91, Arg115, and Lys133 contribute to the substrate site; that span reads RKH.

It belongs to the Nudix hydrolase family. DIPP subfamily. Requires Mg(2+) as cofactor. Mn(2+) serves as cofactor. Expressed in heart and, at lower level in skeletal muscle, pancreas and kidney.

The protein resides in the cytoplasm. The catalysed reaction is diphospho-myo-inositol polyphosphate + H2O = myo-inositol polyphosphate + phosphate.. The enzyme catalyses 5-diphospho-1D-myo-inositol 1,2,3,4,6-pentakisphosphate + H2O = 1D-myo-inositol hexakisphosphate + phosphate + H(+). It carries out the reaction 3,5-bis(diphospho)-1D-myo-inositol 1,2,4,6-tetrakisphosphate + H2O = 3-diphospho-1D-myo-inositol 1,2,4,5,6-pentakisphosphate + phosphate + 2 H(+). It catalyses the reaction 5-diphospho-1D-myo-inositol 1,3,4,6-tetrakisphosphate + H2O = 1D-myo-inositol 1,3,4,5,6-pentakisphosphate + phosphate + H(+). The catalysed reaction is P(1),P(6)-bis(5'-adenosyl) hexaphosphate + H2O = 2 ATP + 2 H(+). The enzyme catalyses P(1),P(5)-bis(5'-adenosyl) pentaphosphate + H2O = ADP + ATP + 2 H(+). It carries out the reaction 5-phospho-alpha-D-ribose 1-diphosphate + H2O = alpha-D-ribose 1,5-bisphosphate + phosphate + H(+). Cleaves the beta-phosphate from diphosphoinositol polyphosphates such as PP-InsP5 (diphosphoinositol pentakisphosphate), PP-InsP4 (diphosphoinositol tetrakisphosphate) and [PP]2-InsP4 (bisdiphosphoinositol tetrakisphosphate), suggesting that it may play a role in signal transduction. Diadenosine polyphosphates, particularly Ap6A (P(1),P(6)-bis(5a-adenosyl) hexaphosphate) and Ap5A (P(1),P(5)-bis(5'-adenosyl) pentaphosphate) are downstream effectors of a signaling cascade that regulates cardiac KATP channels, can also be substrates, although with lower preference than the diphosphoinositol polyphosphates. Can also catalyze the hydrolysis of 5-phosphoribose 1-diphosphate, generating the glycolytic activator ribose 1,5-bisphosphate. Does not play a role in U8 snoRNA decapping activity. Binds U8 snoRNA. The protein is Diphosphoinositol polyphosphate phosphohydrolase 2 of Homo sapiens (Human).